The primary structure comprises 113 residues: uncharacterized protein (113 aa).

The first 22 residues, 1 to 22, serve as a signal peptide directing secretion; that stretch reads MCRFPTFLLIAIAITMLPTILS. N-linked (GlcNAc...) asparagine glycosylation occurs at asparagine 47.

The protein localises to the secreted. This is an uncharacterized protein from Caenorhabditis elegans.